Here is a 364-residue protein sequence, read N- to C-terminus: Probable protein disulfide-isomerase A6 (364 aa).

A signal peptide spans 1 to 28 (MKMEMHQIWSRIALASFAFAILFVSVSA). 2 Thioredoxin domains span residues 29–137 (DDVV…TEGG) and 139–256 (NVKI…EKSG). Active-site nucleophile residues include cysteine 58, cysteine 61, cysteine 177, and cysteine 180. Disulfide bonds link cysteine 58/cysteine 61 and cysteine 177/cysteine 180.

It belongs to the protein disulfide isomerase family.

It localises to the endoplasmic reticulum lumen. It carries out the reaction Catalyzes the rearrangement of -S-S- bonds in proteins.. The protein is Probable protein disulfide-isomerase A6 of Medicago sativa (Alfalfa).